Here is a 1029-residue protein sequence, read N- to C-terminus: Chitin synthase 2 (1029 aa).

3 disordered regions span residues 1–160, 174–216, and 234–257; these read MDRP…GARS, SDVD…SHLR, and AHYG…QKSR. Over residues 61–77 the composition is skewed to low complexity; the sequence is PSVSSIHSRPSSISNIP. Residues 244–257 are compositionally biased toward basic and acidic residues; sequence DQQRRGVREPQKSR. N-linked (GlcNAc...) asparagine glycosylation occurs at N348. The next 8 helical transmembrane spans lie at 639 to 659, 681 to 701, 716 to 736, 752 to 772, 791 to 811, 820 to 840, 918 to 938, and 952 to 972; these read WLNG…QLWA, VLFT…VAGG, LYIF…QFIL, SMVI…YIVI, NLIV…FIYL, SIQY…YAFC, YMVV…SEIY, and ILWS…TFAI.

This sequence belongs to the chitin synthase family. Class II subfamily.

It localises to the cell membrane. It catalyses the reaction [(1-&gt;4)-N-acetyl-beta-D-glucosaminyl](n) + UDP-N-acetyl-alpha-D-glucosamine = [(1-&gt;4)-N-acetyl-beta-D-glucosaminyl](n+1) + UDP + H(+). Polymerizes chitin, a structural polymer of the cell wall and septum, by transferring the sugar moiety of UDP-GlcNAc to the non-reducing end of the growing chitin polymer. Plays an important role in cell wall integrity and has distinct functions in invasive hyphae and vegetative hyphae, but is not involved in plant infection. The polypeptide is Chitin synthase 2 (Pyricularia oryzae (strain 70-15 / ATCC MYA-4617 / FGSC 8958) (Rice blast fungus)).